A 327-amino-acid polypeptide reads, in one-letter code: Aliphatic sulfonates import ATP-binding protein SsuB (327 aa).

The tract at residues 21–54 (ELAQPRIADGDAQDAAVYERDGGAHAPPDGDRAD) is disordered. A compositionally biased stretch (basic and acidic residues) spans 37–54 (VYERDGGAHAPPDGDRAD). In terms of domain architecture, ABC transporter spans 66–285 (VRLTRVSKRY…ARASAAFAAL (220 aa)). 98 to 105 (GRSGCGKS) contributes to the ATP binding site. The disordered stretch occupies residues 300–327 (APAAPNAAGPEGASRGRAAPASGLRWAV).

The protein belongs to the ABC transporter superfamily. Aliphatic sulfonates importer (TC 3.A.1.17.2) family. The complex is composed of two ATP-binding proteins (SsuB), two transmembrane proteins (SsuC) and a solute-binding protein (SsuA).

The protein resides in the cell inner membrane. It catalyses the reaction ATP + H2O + aliphatic sulfonate-[sulfonate-binding protein]Side 1 = ADP + phosphate + aliphatic sulfonateSide 2 + [sulfonate-binding protein]Side 1.. Part of the ABC transporter complex SsuABC involved in aliphatic sulfonates import. Responsible for energy coupling to the transport system. The protein is Aliphatic sulfonates import ATP-binding protein SsuB of Burkholderia pseudomallei (strain K96243).